Consider the following 101-residue polypeptide: Biogenesis of lysosome-related organelles complex 1 subunit SNN1 (101 aa).

Positions 62–100 (DSNEYKAQFKEVNNLQKRLQKITLRLKDLERRSSQLTTS) form a coiled coil.

It belongs to the SNAPIN family. In terms of assembly, component of the biogenesis of lysosome-related organelles complex-1 (BLOC-1).

It is found in the endosome. Functionally, component of the biogenesis of lysosome-related organelles complex-1 (BLOC-1), a complex involved in endosomal cargo sorting. This is Biogenesis of lysosome-related organelles complex 1 subunit SNN1 (SNN1) from Candida glabrata (strain ATCC 2001 / BCRC 20586 / JCM 3761 / NBRC 0622 / NRRL Y-65 / CBS 138) (Yeast).